We begin with the raw amino-acid sequence, 214 residues long: Ras-related protein RABA2b (214 aa).

19–26 (GDSGVGKS) serves as a coordination point for GTP. An Effector region motif is present at residues 41-49 (SKSTIGVEF). GTP-binding positions include 67–71 (DTAGQ), 125–128 (NKSD), and 155–156 (SA). Residues cysteine 211 and cysteine 212 are each lipidated (S-geranylgeranyl cysteine).

This sequence belongs to the small GTPase superfamily. Rab family. In terms of tissue distribution, expressed in root tips.

Its subcellular location is the endosome membrane. It is found in the golgi apparatus. It localises to the trans-Golgi network membrane. In terms of biological role, intracellular vesicle trafficking and protein transport. This chain is Ras-related protein RABA2b (RABA2B), found in Arabidopsis thaliana (Mouse-ear cress).